A 240-amino-acid chain; its full sequence is Bactofilin BacP (240 aa).

The interacts with PadC stretch occupies residues 116-240 (DVEPGRLPAE…KKVVVKKKTR (125 aa)). The tract at residues 117–240 (VEPGRLPAER…KKVVVKKKTR (124 aa)) is disordered. The segment covering 126-150 (RPAVVRPTAVTRPTATPARPTIPAA) has biased composition (low complexity). Pro residues predominate over residues 151-173 (RPMPPPPPSRPTPPPPPARPSAP). The span at 229–240 (AKKKVVVKKKTR) shows a compositional bias: basic residues.

The protein belongs to the bactofilin family. In terms of assembly, interacts with BacN and probably also BacO, the 3 proteins colocalize as an extended structure. Interacts with PadC.

It localises to the cytoplasm. It is found in the cytoskeleton. A non-essential component of the chromosome segregation machinery. Positions the ParA-ParB-parS chromosome segregation machinery within the cell; BacP seems to be the most important bactofilin in this process. Forms a heteropolymeric, subpolar scaffold in the cell; BacP probably forms the core, BacO contributes to position and integrity while BacN does not seem to contribute to assembly. This Myxococcus xanthus (strain DK1622) protein is Bactofilin BacP.